The sequence spans 325 residues: Chain length determinant protein (325 aa).

Residues 1–31 (MRVENNNVSGQNHDPEQIDLIDLLVQLWRGK) are Cytoplasmic-facing. Residues 32 to 52 (MTIIISVIVAIALAIGYLAVA) form a helical membrane-spanning segment. Topologically, residues 53 to 294 (KEKWTSTAII…LPIRRDSPKK (242 aa)) are periplasmic. The helical transmembrane segment at 295–315 (AITLILAVLLGGMVGAGIVLG) threads the bilayer. Residues 316–325 (RNALRNYNAK) lie on the Cytoplasmic side of the membrane.

It belongs to the WzzB/Cld/Rol family.

It is found in the cell inner membrane. It participates in bacterial outer membrane biogenesis; lipopolysaccharide biosynthesis. In terms of biological role, confers a modal distribution of chain length on the O-antigen component of lipopolysaccharide (LPS). Gives rise to a reduced number of short chain molecules and increases in numbers of longer molecules, with a modal value of 13 (in strain O111/M92) and of 17 (in strain K12). This chain is Chain length determinant protein (wzzB), found in Escherichia coli.